Consider the following 208-residue polypeptide: N-(5'-phosphoribosyl)anthranilate isomerase (208 aa).

The protein belongs to the TrpF family.

The enzyme catalyses N-(5-phospho-beta-D-ribosyl)anthranilate = 1-(2-carboxyphenylamino)-1-deoxy-D-ribulose 5-phosphate. It participates in amino-acid biosynthesis; L-tryptophan biosynthesis; L-tryptophan from chorismate: step 3/5. The protein is N-(5'-phosphoribosyl)anthranilate isomerase of Desulforamulus reducens (strain ATCC BAA-1160 / DSM 100696 / MI-1) (Desulfotomaculum reducens).